The primary structure comprises 809 residues: AP-3 complex subunit beta (809 aa).

5 HEAT repeats span residues 37-76 (YYSQ…DDDS), 112-151 (DPNL…SSLA), 153-186 (IILH…AGKN), 187-224 (DYHE…DHLE), and 524-561 (KICP…YDID). Phosphoserine is present on residues Ser-693, Ser-698, Ser-724, and Ser-726. Disordered regions lie at residues 708–739 (FTSS…FTSQ) and 763–809 (PRKI…HLEL). Positions 722-739 (GDSNSISGKGNVNTFTSQ) are enriched in polar residues. Residues 772 to 791 (ESSDEDEDESEESSDDDEYS) are compositionally biased toward acidic residues. Residues 792 to 809 (DSSLGTSSSGTSSSHLEL) show a composition bias toward low complexity.

Belongs to the adaptor complexes large subunit family. Adaptor protein complex 3 (AP-3) is a heterotetramer composed of 2 large adaptins (APL5 and APL6), a medium adaptin (APM3) and a small adaptin (APS3). Post-translationally, pyrophosphorylated by 5-diphosphoinositol pentakisphosphate (5-IP7). Serine pyrophosphorylation is achieved by Mg(2+)-dependent, but enzyme independent transfer of a beta-phosphate from a inositol pyrophosphate to a pre-phosphorylated serine residue.

It is found in the golgi apparatus. It localises to the cytoplasmic vesicle. Its subcellular location is the clathrin-coated vesicle membrane. In terms of biological role, part of the AP-3 complex, an adaptor-related complex which is not clathrin-associated. The complex is associated with the Golgi region as well as more peripheral structures. It facilitates the budding of vesicles from the Golgi membrane and may be directly involved in trafficking to the vacuole. Required for the transport via the ALP pathway, which directs the transport of the cargo proteins PHO8 and VAM3 to the vacuole. This chain is AP-3 complex subunit beta (APL6), found in Saccharomyces cerevisiae (strain ATCC 204508 / S288c) (Baker's yeast).